Consider the following 285-residue polypeptide: Cyclin-Y-like protein 1B (285 aa).

Positions 111 to 209 (PKRNCIFRHF…CFLELLEFNI (99 aa)) constitute a Cyclin N-terminal domain.

It belongs to the cyclin family. Cyclin Y subfamily.

This is Cyclin-Y-like protein 1B from Homo sapiens (Human).